Consider the following 480-residue polypeptide: Ammonium transporter 2 member 4 (480 aa).

Residues 1–27 lie on the Extracellular side of the membrane; sequence MELPSNLLPDEASPEWMNKGDNAWQLT. A helical transmembrane segment spans residues 28-48; it reads AATMVGLQSIPGLVILYGSLV. The Cytoplasmic portion of the chain corresponds to 49-51; sequence KKT. The helical transmembrane segment at 52 to 72 threads the bilayer; it reads WAINSAFMAFYAFASVLLCWV. Residues 73–113 lie on the Extracellular side of the membrane; it reads SWAYQMSFGEKMVFFLGKPNVALDEKFLLGKAFLGNFPNAT. The N-linked (GlcNAc...) asparagine glycan is linked to Asn111. A helical transmembrane segment spans residues 114-134; it reads MVFYQGVFAGLTLILIAGALL. Residues 135–141 lie on the Cytoplasmic side of the membrane; it reads GRMNIRA. The chain crosses the membrane as a helical span at residues 142 to 162; sequence WMLFVPLWVTFSYTVVAFSIW. Over 163–175 the chain is Extracellular; it reads CPDGWLAKRGVID. The chain crosses the membrane as a helical span at residues 176 to 196; that stretch reads FAGGYVIHLSAGVAGFTAAYW. At 197–214 the chain is on the cytoplasmic side; that stretch reads VGPRADKDRETFPAATNN. The helical transmembrane segment at 215-235 threads the bilayer; the sequence is MIMVLAGAGLLWMGWSGFNGG. The Extracellular segment spans residues 236–242; sequence APFVAST. A helical membrane pass occupies residues 243-263; it reads IASLAILNTHVCTAASITVWV. Topologically, residues 264–274 are cytoplasmic; sequence MLDTFYFGKPT. A helical transmembrane segment spans residues 275 to 295; sequence VFGAVQGMITGLVCITPAAGV. Residues 296 to 298 lie on the Extracellular side of the membrane; it reads VQG. Residues 299 to 319 form a helical membrane-spanning segment; that stretch reads WAAILMGFISGSIPWYTMMVL. The Cytoplasmic portion of the chain corresponds to 320-334; sequence HNKVNFLKKIDDPMA. A helical transmembrane segment spans residues 335–355; sequence VFHTHAIAGALGGILTGFFAV. Residues 356–394 lie on the Extracellular side of the membrane; it reads PKLCRLFYMVPDWEKYIGLAYGLQNKGATQAGLKQMVIQ. A helical transmembrane segment spans residues 395–415; sequence IEAIVFVICYNVLMTSLICLI. The Cytoplasmic portion of the chain corresponds to 416–480; sequence VRVIVPLRLN…SRSLGELQMV (65 aa).

It belongs to the ammonia transporter channel (TC 1.A.11.2) family.

It is found in the cell membrane. Involved in ammonium transport. May be involved in arbuscular mycorrhizal (AM) symbiosis with AM fungi. The sequence is that of Ammonium transporter 2 member 4 from Medicago truncatula (Barrel medic).